The following is a 215-amino-acid chain: Cytochrome b6 (215 aa).

The chain crosses the membrane as a helical span at residues 32–52; it reads IFYCLGGITLTCFIVQVATGF. Cys-35 serves as a coordination point for heme c. Positions 86 and 100 each coordinate heme b. 3 consecutive transmembrane segments (helical) span residues 90–110, 116–136, and 186–206; these read ASMM…TGGF, LTWI…VTGY, and LHTF…FLMI. Positions 187 and 202 each coordinate heme b.

Belongs to the cytochrome b family. PetB subfamily. In terms of assembly, the 4 large subunits of the cytochrome b6-f complex are cytochrome b6, subunit IV (17 kDa polypeptide, PetD), cytochrome f and the Rieske protein, while the 4 small subunits are PetG, PetL, PetM and PetN. The complex functions as a dimer. Heme b is required as a cofactor. Requires heme c as cofactor.

It localises to the plastid. Its subcellular location is the chloroplast thylakoid membrane. Its function is as follows. Component of the cytochrome b6-f complex, which mediates electron transfer between photosystem II (PSII) and photosystem I (PSI), cyclic electron flow around PSI, and state transitions. The chain is Cytochrome b6 from Chara vulgaris (Common stonewort).